We begin with the raw amino-acid sequence, 327 residues long: Vacuolar protein sorting-associated protein 26A (327 aa).

Positions 306–327 (RTNFHQRFESPESQASAEQPEM) are disordered. Ser-315 is modified (phosphoserine). Residues 316–327 (PESQASAEQPEM) are compositionally biased toward polar residues.

This sequence belongs to the VPS26 family. Component of the heterotrimeric retromer cargo-selective complex (CSC), also described as vacuolar protein sorting subcomplex (VPS), formed by VPS26 (VPS26A or VPS26B), VPS29 and VPS35. The CSC has a highly elongated structure with VPS26 and VPS29 binding independently at opposite distal ends of VPS35 as central platform. The CSC is believed to associate with variable sorting nexins to form functionally distinct retromer complex variants. The originally described retromer complex (also called SNX-BAR retromer) is a pentamer containing the CSC and a heterodimeric membrane-deforming subcomplex formed between SNX1 or SNX2 and SNX5 or SNX6 (also called SNX-BAR subcomplex); the respective CSC and SNX-BAR subcomplexes associate with low affinity. The CSC associates with SNX3 to form a SNX3-retromer complex. The CSC associates with SNX27, the WASH complex and the SNX-BAR subcomplex to form the SNX27-retromer complex. Interacts with VPS29, VPS35, SNX27, SNX1, SNX2, SNX5, SNX6, SNX3, RAB7A, ECPAS, EHD1, WASHC5, SORL1.

The protein localises to the cytoplasm. It localises to the endosome membrane. Its subcellular location is the early endosome. Its function is as follows. Acts as a component of the retromer cargo-selective complex (CSC). The CSC is believed to be the core functional component of retromer or respective retromer complex variants acting to prevent missorting of selected transmembrane cargo proteins into the lysosomal degradation pathway. The recruitment of the CSC to the endosomal membrane involves RAB7A and SNX3. The SNX-BAR retromer mediates retrograde transport of cargo proteins from endosomes to the trans-Golgi network (TGN) and is involved in endosome-to-plasma membrane transport for cargo protein recycling. The SNX3-retromer mediates the retrograde endosome-to-TGN transport of WLS distinct from the SNX-BAR retromer pathway. The SNX27-retromer is believed to be involved in endosome-to-plasma membrane trafficking and recycling of a broad spectrum of cargo proteins. The CSC complex seems to act as recruitment hub for other proteins, such as the WASH complex and TBC1D5. Required for retrograde transport of lysosomal enzyme receptor IGF2R. Required to regulate transcytosis of the polymeric immunoglobulin receptor (pIgR-pIgA). Required for the endosomal localization of WASHC2 (indicative for the WASH complex). Required for the endosomal localization of TBC1D5. Mediates retromer cargo recognition of SORL1 and is involved in trafficking of SORL1 implicated in sorting and processing of APP. Involved in retromer-independent lysosomal sorting of F2R. Involved in recycling of ADRB2. Acts redundantly with VSP26B in SNX-27 mediated endocytic recycling of SLC2A1/GLUT1. Enhances the affinity of SNX27 for PDZ-binding motifs in cargo proteins. The chain is Vacuolar protein sorting-associated protein 26A (VPS26A) from Bos taurus (Bovine).